Here is a 196-residue protein sequence, read N- to C-terminus: dITP/XTP pyrophosphatase (196 aa).

Residue 7–12 coordinates substrate; that stretch reads THNPGK. 2 residues coordinate Mg(2+): Asp40 and Asp69. Asp69 (proton acceptor) is an active-site residue. Residues Ser70, 150-153, Lys173, and 178-179 contribute to the substrate site; these read FGYD and HR.

This sequence belongs to the HAM1 NTPase family. Homodimer. Mg(2+) serves as cofactor.

The enzyme catalyses XTP + H2O = XMP + diphosphate + H(+). It catalyses the reaction dITP + H2O = dIMP + diphosphate + H(+). It carries out the reaction ITP + H2O = IMP + diphosphate + H(+). In terms of biological role, pyrophosphatase that catalyzes the hydrolysis of nucleoside triphosphates to their monophosphate derivatives, with a high preference for the non-canonical purine nucleotides XTP (xanthosine triphosphate), dITP (deoxyinosine triphosphate) and ITP. Seems to function as a house-cleaning enzyme that removes non-canonical purine nucleotides from the nucleotide pool, thus preventing their incorporation into DNA/RNA and avoiding chromosomal lesions. In Exiguobacterium sp. (strain ATCC BAA-1283 / AT1b), this protein is dITP/XTP pyrophosphatase.